The chain runs to 97 residues: Large ribosomal subunit protein eL21 (97 aa).

Belongs to the eukaryotic ribosomal protein eL21 family.

In Methanosarcina barkeri (strain Fusaro / DSM 804), this protein is Large ribosomal subunit protein eL21.